Reading from the N-terminus, the 66-residue chain is Phylloseptin-S6 (66 aa).

The first 22 residues, 1 to 22, serve as a signal peptide directing secretion; the sequence is MAFLKKSLFLVLFLGLVSLSIC. Positions 23–46 are excised as a propeptide; sequence EEEKRETEEEEHDQEEDDKSEEKR. Residues 25–44 are disordered; sequence EKRETEEEEHDQEEDDKSEE. Acidic residues predominate over residues 30 to 41; the sequence is EEEEHDQEEDDK. Position 65 is a leucine amide (leucine 65).

Belongs to the frog skin active peptide (FSAP) family. Phylloseptin subfamily. In terms of tissue distribution, expressed by the skin glands.

The protein localises to the secreted. The protein resides in the target cell membrane. Antimicrobial peptide with high activity against Gram-positive bacteria, low activity against Gram-negative bacteria, and moderate activity against fungi. Acts by causing bacterial membrane disruption inducing leakage of the intracellular content followed by cell death. It adopts an alpha-helical amphipathic structure in membrane environments. Also shows highly potent antiparasitic activity against Leishmania species. Shows moderate hemolytic activity on human erythrocytes. Is also active on human monocytes. The chain is Phylloseptin-S6 from Phyllomedusa sauvagei (Sauvage's leaf frog).